A 30-amino-acid chain; its full sequence is Truncated interleukin-1-binding protein (30 aa).

The signal sequence occupies residues Met-1–Val-18.

The protein belongs to the interleukin-1 receptor family.

The protein is Truncated interleukin-1-binding protein of Vaccinia virus (strain Copenhagen) (VACV).